We begin with the raw amino-acid sequence, 308 residues long: Glycine--tRNA ligase alpha subunit (308 aa).

The protein belongs to the class-II aminoacyl-tRNA synthetase family. Tetramer of two alpha and two beta subunits.

It localises to the cytoplasm. The enzyme catalyses tRNA(Gly) + glycine + ATP = glycyl-tRNA(Gly) + AMP + diphosphate. The protein is Glycine--tRNA ligase alpha subunit of Brucella canis (strain ATCC 23365 / NCTC 10854 / RM-666).